A 416-amino-acid chain; its full sequence is CinA-like protein (416 aa).

This sequence belongs to the CinA family.

The polypeptide is CinA-like protein (Rippkaea orientalis (strain PCC 8801 / RF-1) (Cyanothece sp. (strain PCC 8801))).